The following is a 616-amino-acid chain: Chaperone protein HscA (616 aa).

Belongs to the heat shock protein 70 family.

Its function is as follows. Chaperone involved in the maturation of iron-sulfur cluster-containing proteins. Has a low intrinsic ATPase activity which is markedly stimulated by HscB. Involved in the maturation of IscU. This chain is Chaperone protein HscA, found in Salmonella enteritidis PT4 (strain P125109).